A 651-amino-acid polypeptide reads, in one-letter code: Forkhead box protein K2 (651 aa).

The span at 1–13 (MAAAAALSGAGAP) shows a compositional bias: low complexity. Positions 1-29 (MAAAAALSGAGAPPAGGGAGGGGSPPGGW) are disordered. The segment covering 14–26 (PAGGGAGGGGSPP) has biased composition (gly residues). At Ser-24 the chain carries Phosphoserine. Residues 48–119 (VTIGRNSSQG…NGVFVDGVFQ (72 aa)) form the FHA domain. The interval 120–162 (RRGAPPLQLPRVCTFRFPSTNIKITFTALSSEKREKQEAPESP) is required for interaction with DVL2 and SUDS3. At Arg-135 the chain carries Omega-N-methylarginine. Disordered regions lie at residues 150–171 (SEKREKQEAPESPVKPVQPHIS) and 194–251 (TISA…SKPP). Glycyl lysine isopeptide (Lys-Gly) (interchain with G-Cter in SUMO2) cross-links involve residues Lys-152 and Lys-155. The segment covering 194 to 203 (TISAANSCPS) has biased composition (polar residues). A Phosphoserine modification is found at Ser-230. The span at 233–249 (ENEKEASGGDSPKDDSK) shows a compositional bias: basic and acidic residues. The fork-head DNA-binding region spans 249-344 (KPPYSYAQLI…EQAFRKRRPR (96 aa)). Residues 291–309 (KGWQNSIRHNLSLNRYFIK) form a DNA-binding; major groove region. Residues Leu-301, Ser-302, Asn-304, and Phe-307 each contribute to the Mg(2+) site. DNA-binding; minor groove regions lie at residues 319–323 (KGSFW) and 339–344 (RKRRPR). A disordered region spans residues 350-399 (RTPLGPLSSRSAPASPNHAGVLSAHSSGAQTPESLSREGSPAPLEPEPGA). Ser-364 is subject to Phosphoserine. The span at 373–383 (AHSSGAQTPES) shows a compositional bias: polar residues. 3 positions are modified to phosphoserine: Ser-389, Ser-415, and Ser-419. A Glycyl lysine isopeptide (Lys-Gly) (interchain with G-Cter in SUMO2) cross-link involves residue Lys-518. Phosphoserine is present on Ser-590. Polar residues predominate over residues 601–614 (ASASLPTKRQNGDQ). Residues 601–623 (ASASLPTKRQNGDQAEQPELKRV) are disordered. Residue Lys-624 forms a Glycyl lysine isopeptide (Lys-Gly) (interchain with G-Cter in SUMO2) linkage.

As to quaternary structure, component of SIN3A-, but not SIN3B-, containing multiprotein complexes. Interacts with DVL1, DVL2 (when phosphorylated) and DVL3; the interaction induces DVL2 nuclear translocation. Interacts with SUDS3. Interacts with BAP1 (when phosphorylated); leading to recruit the PR-DUB complex and repress FOXK2 target genes. Accessory component of the polycomb repressive deubiquitinase (PR-DUB) complex, at least composed of BAP1, one of ASXL1, ASXL2 or (probably) ASXL3 and one of MBD5 or MBD6. The PR-DUB core associates with a number of accessory proteins, including FOXK1, FOXK2, KDM1B, HCFC1 and OGT. In terms of processing, hyperphosphorylated during mitosis by CDK1 and, to a lower extent, CDK2. Phosphorylation at Ser-364 and Ser-419 affects stability by promoting degradation. In terms of tissue distribution, expressed in a wide range of adult brain regions, namely the piriform cortex, the major islands of Calleja and cells lining the lateral ventricles, the bed nucleus of stria terminalis, the paraventricular thalamic nucleus, habenula and all structures of the hippocampus. Also present in the hypothalamus, cerebral cortex and in the Purkinje cell layer in the cerebellum. Additionally expressed in dopamine neurons of the substantia and more sparsely in the ventral tegmental area.

The protein localises to the nucleus. It localises to the cytoplasm. Its function is as follows. Transcriptional regulator involved in different processes such as glucose metabolism, aerobic glycolysis and autophagy. Recognizes and binds the forkhead DNA sequence motif (5'-GTAAACA-3') and can both act as a transcription activator or repressor, depending on the context. Together with FOXK1, acts as a key regulator of metabolic reprogramming towards aerobic glycolysis, a process in which glucose is converted to lactate in the presence of oxygen. Acts by promoting expression of enzymes for glycolysis (such as hexokinase-2 (HK2), phosphofructokinase, pyruvate kinase (PKLR) and lactate dehydrogenase), while suppressing further oxidation of pyruvate in the mitochondria by up-regulating pyruvate dehydrogenase kinases PDK1 and PDK4. Probably plays a role in gluconeogenesis during overnight fasting, when lactate from white adipose tissue and muscle is the main substrate. Together with FOXK1, acts as a negative regulator of autophagy in skeletal muscle: in response to starvation, enters the nucleus, binds the promoters of autophagy genes and represses their expression, preventing proteolysis of skeletal muscle proteins. In addition to the 5'-GTAAACA-3' DNA motif, also binds the 5'-TGANTCA-3' palindromic DNA motif, and co-associates with JUN/AP-1 to activate transcription. Also able to bind to a minimal DNA heteroduplex containing a G/T-mismatch with 5'-TRT[G/T]NB-3' sequence. Binds to NFAT-like motifs (purine-rich) in the IL2 promoter. Positively regulates WNT/beta-catenin signaling by translocating DVL proteins into the nucleus. Accessory component of the polycomb repressive deubiquitinase (PR-DUB) complex; recruits the PR-DUB complex to specific FOXK2-bound genes. The protein is Forkhead box protein K2 of Mus musculus (Mouse).